The sequence spans 228 residues: Ribulose-phosphate 3-epimerase (228 aa).

Ser-9 contributes to the substrate binding site. Positions 34, 36, and 70 each coordinate a divalent metal cation. Residue Asp-36 is the Proton acceptor of the active site. Residues His-70, 146–149 (GKGG), 175–177 (DGG), and 197–198 (GT) each bind substrate. Asp-175 is an a divalent metal cation binding site. The active-site Proton donor is the Asp-175.

The protein belongs to the ribulose-phosphate 3-epimerase family. It depends on Co(2+) as a cofactor. Fe(2+) serves as cofactor. Mn(2+) is required as a cofactor. Requires Zn(2+) as cofactor.

The enzyme catalyses D-ribulose 5-phosphate = D-xylulose 5-phosphate. It participates in carbohydrate degradation; pentose phosphate pathway; D-xylulose 5-phosphate from D-ribulose 5-phosphate (non-oxidative stage): step 1/1. Its function is as follows. Catalyzes the reversible epimerization of D-ribulose 5-phosphate to D-xylulose 5-phosphate. The protein is Ribulose-phosphate 3-epimerase of Schizosaccharomyces pombe (strain 972 / ATCC 24843) (Fission yeast).